We begin with the raw amino-acid sequence, 785 residues long: Cadherin-7 (785 aa).

The N-terminal stretch at 1 to 27 (MKLGKVEFCHFLQLIALFLCFSGMSQA) is a signal peptide. A propeptide spanning residues 28-47 (ELSRSRSKPYFQSGRSRTKR) is cleaved from the precursor. Residues 28 to 607 (ELSRSRSKPY…AYVLPAGLST (580 aa)) lie on the Extracellular side of the membrane. 5 Cadherin domains span residues 49-153 (WVWN…EPKF), 154-262 (LDGP…PPRF), 263-377 (PRRS…PPVF), 378-482 (SSPL…APEF), and 482-599 (FAMD…AEAY). Asparagine 449 and asparagine 530 each carry an N-linked (GlcNAc...) asparagine glycan. Residues 608–628 (GALIAILACVLTLLVLILLIV) traverse the membrane as a helical segment. At 629-785 (TMRRRKKEPL…YGTGQESLYS (157 aa)) the chain is on the cytoplasmic side.

It localises to the cell membrane. Functionally, cadherins are calcium-dependent cell adhesion proteins. They preferentially interact with themselves in a homophilic manner in connecting cells; cadherins may thus contribute to the sorting of heterogeneous cell types. The sequence is that of Cadherin-7 (CDH7) from Homo sapiens (Human).